The primary structure comprises 423 residues: D-tagatose-1,6-bisphosphate aldolase subunit GatZ (423 aa).

The protein belongs to the GatZ/KbaZ family. GatZ subfamily. Forms a complex with GatY.

It functions in the pathway carbohydrate metabolism; D-tagatose 6-phosphate degradation; D-glyceraldehyde 3-phosphate and glycerone phosphate from D-tagatose 6-phosphate: step 2/2. Its function is as follows. Component of the tagatose-1,6-bisphosphate aldolase GatYZ that is required for full activity and stability of the Y subunit. Could have a chaperone-like function for the proper and stable folding of GatY. When expressed alone, GatZ does not show any aldolase activity. Is involved in the catabolism of galactitol. This chain is D-tagatose-1,6-bisphosphate aldolase subunit GatZ, found in Klebsiella pneumoniae subsp. pneumoniae (strain ATCC 700721 / MGH 78578).